Consider the following 505-residue polypeptide: MEKLQGHRELDRSWQHNFFYPLIFQEYIYVFAYDHALNKLILLENAIAKKSSLLIVKRLITRMYQQNHFILSVNDSNQNEIFGHKHKKNLYSQMITEGFAVIVEIPFSLLLISSLEGKEIVESQNLRSIHSIFPFLEDKFLHLNYVLDILIPYPAHLEILVQTLRYWLKDASSLHLLRYFLYEYRNWNSLIRPKESISPFSKRNRRLFLFLYNLLVYEYESLFVILRKQSSYLRSTSFGALLERIHFYGKLKYLVKVKVKVFGVILWLFKEPFLHYVRYQGKCLLASKGTSFLMYKWKYYFIAFWQCHFSVWSQPRRIYINQLSNYSLDFMGFISNVGLNSSVIRSQMLENSFLVDNIIKKFDTIVPIIPLVGSLAKAKFCNGLGHPISKSVWTDLSDADIIDRFGRICRNLSHYYSGSSRKKSLYRIKYILRLSCARTLSRKHKSTVRAFLKRLGSEFLEEFFTEEEKVLSLILPRDSSTLSGFYRGRVWYLDIICIHNLANDE.

The protein belongs to the intron maturase 2 family. MatK subfamily.

The protein localises to the plastid. It localises to the chloroplast. Functionally, usually encoded in the trnK tRNA gene intron. Probably assists in splicing its own and other chloroplast group II introns. This chain is Maturase K, found in Amaranthus greggii (Gregg's amaranth).